The chain runs to 126 residues: Fluoride-specific ion channel FluC (126 aa).

4 consecutive transmembrane segments (helical) span residues 6–26 (FVAVGVGAAAGAWLRWGFSVL), 36–56 (YGTLAANLLGGYLIGLAVGFF), 69–89 (LAITGFLGGLTTFSTFSSEVV), and 99–119 (WAAMHLLLHLGGSLLLTALGL). The Na(+) site is built by G76 and T79.

It belongs to the fluoride channel Fluc/FEX (TC 1.A.43) family.

Its subcellular location is the cell inner membrane. It catalyses the reaction fluoride(in) = fluoride(out). Na(+) is not transported, but it plays an essential structural role and its presence is essential for fluoride channel function. Fluoride-specific ion channel. Important for reducing fluoride concentration in the cell, thus reducing its toxicity. This is Fluoride-specific ion channel FluC from Cupriavidus taiwanensis (strain DSM 17343 / BCRC 17206 / CCUG 44338 / CIP 107171 / LMG 19424 / R1) (Ralstonia taiwanensis (strain LMG 19424)).